The sequence spans 172 residues: Small integral membrane protein 23 (172 aa).

Residues 1–36 are Cytoplasmic-facing; it reads MATQQVDSRRQVAAEQVAAQLLERRRGSHCDDEKQT. Residues 37–53 form a helical; Signal-anchor for type II membrane protein membrane-spanning segment; that stretch reads LLALLILVLYLSTEIWG. Residues 54 to 172 are Extracellular-facing; it reads SSWEVSERIR…LEISLSGAEL (119 aa). Residues 96-128 adopt a coiled-coil conformation; it reads LKEKLHVFSEKLEEEVQQLEQLAWDLELWLDAL.

Its subcellular location is the cell membrane. This is Small integral membrane protein 23 (SMIM23) from Homo sapiens (Human).